Reading from the N-terminus, the 358-residue chain is MKNVAVLSGDGIGPEVMEIAISVLKKALGAKVSEFQFKEGFVGGIAIDKTGHPLPPETLKLCEESSAILFGSVGGPKWETLPPEKQPERGALLPLRKHFDLFANLRPAIIYPELKNASPVRSDIIGNGLDILILRELTGGIYFGQPKGREGSGQEEFAYDTMKYSRREIERIAKVAFQAARKRNNKVTSIDKANVLTTSVFWKEVVIELHKKEFSDVQLNHLYVDNAAMQLIVNPKQFDVVLCENMFGDILSDEASIITGSIGMLPSASLSESGFGLYEPSGGSAPDIAGKGVANPIAQVLSAALMLRYSFSMEEEANKIETAVRKTIASGKRTRDIAEVGSTIVGTKEIGQLIESFL.

75–88 serves as a coordination point for NAD(+); it reads GPKWETLPPEKQPE. Substrate is bound by residues R96, R106, R135, and D225. Residues D225, D249, and D253 each coordinate Mg(2+). 283 to 295 provides a ligand contact to NAD(+); the sequence is GSAPDIAGKGVAN.

Belongs to the isocitrate and isopropylmalate dehydrogenases family. LeuB type 1 subfamily. As to quaternary structure, homodimer. Mg(2+) serves as cofactor. Requires Mn(2+) as cofactor.

The protein resides in the cytoplasm. It catalyses the reaction (2R,3S)-3-isopropylmalate + NAD(+) = 4-methyl-2-oxopentanoate + CO2 + NADH. Its pathway is amino-acid biosynthesis; L-leucine biosynthesis; L-leucine from 3-methyl-2-oxobutanoate: step 3/4. Functionally, catalyzes the oxidation of 3-carboxy-2-hydroxy-4-methylpentanoate (3-isopropylmalate) to 3-carboxy-4-methyl-2-oxopentanoate. The product decarboxylates to 4-methyl-2 oxopentanoate. This chain is 3-isopropylmalate dehydrogenase, found in Leptospira interrogans serogroup Icterohaemorrhagiae serovar copenhageni (strain Fiocruz L1-130).